The chain runs to 183 residues: Endoribonuclease YbeY (183 aa).

3 residues coordinate Zn(2+): histidine 118, histidine 122, and histidine 128. The interval 156–183 (EREQAQRSADSAVLGAVGLEEQDGPGTH) is disordered.

The protein belongs to the endoribonuclease YbeY family. Zn(2+) is required as a cofactor.

The protein localises to the cytoplasm. In terms of biological role, single strand-specific metallo-endoribonuclease involved in late-stage 70S ribosome quality control and in maturation of the 3' terminus of the 16S rRNA. The protein is Endoribonuclease YbeY of Saccharopolyspora erythraea (strain ATCC 11635 / DSM 40517 / JCM 4748 / NBRC 13426 / NCIMB 8594 / NRRL 2338).